Here is a 248-residue protein sequence, read N- to C-terminus: NADP-dependent 3-hydroxy acid dehydrogenase YdfG (248 aa).

NADP(+)-binding positions include 7 to 12, 32 to 33, 54 to 55, and N81; these read GATAGF, RR, and DV. S134 provides a ligand contact to substrate. NADP(+) contacts are provided by residues Y147, K151, and 177-185; that span reads PGLVGGTEF. The active-site Proton acceptor is Y147.

The protein belongs to the short-chain dehydrogenases/reductases (SDR) family. Homotetramer.

The enzyme catalyses 3-hydroxypropanoate + NADP(+) = 3-oxopropanoate + NADPH + H(+). The catalysed reaction is L-allo-threonine + NADP(+) = aminoacetone + CO2 + NADPH. NADP-dependent dehydrogenase with broad substrate specificity acting on 3-hydroxy acids. Catalyzes the NADP-dependent oxidation of L-allo-threonine to L-2-amino-3-keto-butyrate, which is spontaneously decarboxylated into aminoacetone. Also acts on D-threonine, L-serine, D-serine, D-3-hydroxyisobutyrate, L-3-hydroxyisobutyrate, D-glycerate and L-glycerate. Able to catalyze the reduction of the malonic semialdehyde to 3-hydroxypropionic acid. YdfG is apparently supplementing RutE, the presumed malonic semialdehyde reductase involved in pyrimidine degradation since both are able to detoxify malonic semialdehyde. This is NADP-dependent 3-hydroxy acid dehydrogenase YdfG from Salmonella typhi.